Consider the following 582-residue polypeptide: DNA mismatch repair protein MutL (582 aa).

This sequence belongs to the DNA mismatch repair MutL/HexB family.

In terms of biological role, this protein is involved in the repair of mismatches in DNA. It is required for dam-dependent methyl-directed DNA mismatch repair. May act as a 'molecular matchmaker', a protein that promotes the formation of a stable complex between two or more DNA-binding proteins in an ATP-dependent manner without itself being part of a final effector complex. This chain is DNA mismatch repair protein MutL, found in Chlamydia abortus (strain DSM 27085 / S26/3) (Chlamydophila abortus).